The following is a 224-amino-acid chain: Heme response regulator HssR (224 aa).

Residues 3 to 116 enclose the Response regulatory domain; sequence KCLIVDDDYK…ELLFRIQAVL (114 aa). A 4-aspartylphosphate modification is found at Asp-52. A DNA-binding region (ompR/PhoB-type) is located at residues 124–222; sequence QDIIKLGNVT…VRGQGYRVIT (99 aa).

Post-translationally, phosphorylated by HssS.

It is found in the cytoplasm. Functionally, member of the two-component regulatory system HssS/HssR involved in intracellular heme homeostasis and tempering of staphylococcal virulence. Phosphorylated HssR binds to a direct repeat sequence within hrtAB promoter and activates the expression of hrtAB, an efflux pump, in response to extracellular heme, hemin, hemoglobin or blood. In Staphylococcus haemolyticus (strain JCSC1435), this protein is Heme response regulator HssR (hssR).